The following is an 84-amino-acid chain: MAAQVTESDQIKQFKEFLGTYNKLTENCFMDCVKDFTTREVKPEETTCSESCLQKYLKMTQRISMRFQEYHIQQNERWPQKPDY.

The Twin CX3C motif signature appears at 28-52 (CFMDCVKDFTTREVKPEETTCSESC). Cystine bridges form between Cys28–Cys52 and Cys32–Cys48.

Belongs to the small Tim family. As to quaternary structure, heterohexamer; composed of 3 copies of TIMM9 and 3 copies of TIMM10/TIM10A, named soluble 70 kDa complex. The complex forms a 6-bladed alpha-propeller structure and associates with the TIMM22 component of the TIM22 complex. Interacts with multi-pass transmembrane proteins in transit.

It is found in the mitochondrion inner membrane. In terms of biological role, mitochondrial intermembrane chaperone that participates in the import and insertion of multi-pass transmembrane proteins into the mitochondrial inner membrane. May also be required for the transfer of beta-barrel precursors from the TOM complex to the sorting and assembly machinery (SAM complex) of the outer membrane. Acts as a chaperone-like protein that protects the hydrophobic precursors from aggregation and guide them through the mitochondrial intermembrane space. The chain is Mitochondrial import inner membrane translocase subunit Tim9 (timm9) from Danio rerio (Zebrafish).